We begin with the raw amino-acid sequence, 483 residues long: NADH-quinone oxidoreductase subunit N (483 aa).

13 helical membrane passes run 11–31 (ALPE…DLFL), 37–57 (SLIY…TACT), 82–100 (LMMY…QYVS), 110–130 (FALT…QHFL), 164–184 (FVLG…LYGV), 205–225 (AVLV…LGAV), 239–259 (PTAV…AFMI), 268–288 (VLAI…ILIG), 301–321 (MLAY…MSAG), 329–349 (MFYI…MLLL), 372–392 (YAFL…TLGF), 406–426 (GFVG…FYYL), and 446–466 (PIDM…LGMF).

The protein belongs to the complex I subunit 2 family. NDH-1 is composed of 14 different subunits. Subunits NuoA, H, J, K, L, M, N constitute the membrane sector of the complex.

Its subcellular location is the cell inner membrane. It catalyses the reaction a quinone + NADH + 5 H(+)(in) = a quinol + NAD(+) + 4 H(+)(out). Functionally, NDH-1 shuttles electrons from NADH, via FMN and iron-sulfur (Fe-S) centers, to quinones in the respiratory chain. The immediate electron acceptor for the enzyme in this species is believed to be ubiquinone. Couples the redox reaction to proton translocation (for every two electrons transferred, four hydrogen ions are translocated across the cytoplasmic membrane), and thus conserves the redox energy in a proton gradient. The polypeptide is NADH-quinone oxidoreductase subunit N (Methylovorus glucosotrophus (strain SIP3-4)).